The sequence spans 783 residues: LPS-assembly protein LptD (783 aa).

The N-terminal stretch at 1–24 (MSCFSRTFLAASISAALFAPQIQA) is a signal peptide.

Belongs to the LptD family. In terms of assembly, component of the lipopolysaccharide transport and assembly complex. Interacts with LptE and LptA.

It localises to the cell outer membrane. Together with LptE, is involved in the assembly of lipopolysaccharide (LPS) at the surface of the outer membrane. This Vibrio cholerae serotype O1 (strain ATCC 39315 / El Tor Inaba N16961) protein is LPS-assembly protein LptD.